The chain runs to 393 residues: Flap endonuclease 1 (393 aa).

Residues 1-108 form an N-domain region; sequence MGVLGLSKLL…SELESRRQRA (108 aa). Asp-34 contributes to the Mg(2+) binding site. Residue Arg-74 participates in DNA binding. Asp-90 contributes to the Mg(2+) binding site. Positions 99-120 are enriched in basic and acidic residues; sequence SELESRRQRAEDAKHEFEKAKE. The segment at 99 to 127 is disordered; that stretch reads SELESRRQRAEDAKHEFEKAKEEGDDEAM. The segment at 126 to 257 is I-domain; the sequence is AMEKMSKRMV…HKAWEGIKKY (132 aa). 4 residues coordinate Mg(2+): Glu-162, Glu-164, Asp-183, and Asp-185. Glu-162 provides a ligand contact to DNA. Residues Gly-235 and Asp-237 each coordinate DNA. Asp-237 provides a ligand contact to Mg(2+). The tract at residues 340–348 is interaction with PCNA; it reads TQGRLDQFF. Positions 358–393 are disordered; the sequence is NSEASTAGTKRNRGAVALPGVLQRKSSSGHKKAVKK. The span at 384-393 shows a compositional bias: basic residues; sequence SSGHKKAVKK.

Belongs to the XPG/RAD2 endonuclease family. FEN1 subfamily. In terms of assembly, interacts with PCNA. Three molecules of FEN1 bind to one PCNA trimer with each molecule binding to one PCNA monomer. PCNA stimulates the nuclease activity without altering cleavage specificity. Mg(2+) is required as a cofactor. Post-translationally, phosphorylated. Phosphorylation upon DNA damage induces relocalization to the nuclear plasma.

The protein localises to the nucleus. Its subcellular location is the nucleolus. It localises to the nucleoplasm. It is found in the mitochondrion. Structure-specific nuclease with 5'-flap endonuclease and 5'-3' exonuclease activities involved in DNA replication and repair. During DNA replication, cleaves the 5'-overhanging flap structure that is generated by displacement synthesis when DNA polymerase encounters the 5'-end of a downstream Okazaki fragment. It enters the flap from the 5'-end and then tracks to cleave the flap base, leaving a nick for ligation. Also involved in the long patch base excision repair (LP-BER) pathway, by cleaving within the apurinic/apyrimidinic (AP) site-terminated flap. Acts as a genome stabilization factor that prevents flaps from equilibrating into structures that lead to duplications and deletions. Also possesses 5'-3' exonuclease activity on nicked or gapped double-stranded DNA, and exhibits RNase H activity. Also involved in replication and repair of rDNA and in repairing mitochondrial DNA. In Trypanosoma brucei brucei (strain 927/4 GUTat10.1), this protein is Flap endonuclease 1.